The following is a 1383-amino-acid chain: MRSLIYFWLLLPVLPTLSLPQDVTRCQSTTNFRRFFSKFNVQAPAVVVLGGYLPSMNSSSWYCGTGIETASGVHGIFLSYIDSGQGFEIGISQEPFDPSGYQLYLHKATNGNTNAIARLRICQFPDNKTLGPTVNDVTTGRNCLFNKAIPAYMRDGKDIVVGITWDNDRVTVFADKIYHFYLKNDWSRVATRCYNRRSCAMQYVYTPTYYMLNVTSAGEDGIYYEPCTANCTGYAANVFATDSNGHIPEGFSFNNWFLLSNDSTLLHGKVVSNQPLLVNCLLAIPKIYGLGQFFSFNHTMDGVCNGAAVDRAPEALRFNINDTSVILAEGSIVLHTALGTNLSFVCSNSSDPHLAIFAIPLGATEVPYYCFLKVDTYNSTVYKFLAVLPPTVREIVITKYGDVYVNGFGYLHLGLLDAVTINFTGHGTDDDVSGFWTIASTNFVDALIEVQGTSIQRILYCDDPVSQLKCSQVAFDLDDGFYPISSRNLLSHEQPISFVTLPSFNDHSFVNITVSAAFGGLSSANLVASDTTINGFSSFCVDTRQFTITLFYNVTNSYGYVSKSQDSNCPFTLQSVNDYLSFSKFCVSTSLLAGACTIDLFGYPAFGSGVKLTSLYFQFTKGELITGTPKPLEGITDVSFMTLDVCTKYTIYGFKGEGIITLTNSSILAGVYYTSDSGQLLAFKNVTSGAVYSVTPCSFSEQAAYVNDDIVGVISSLSNSTFNNTRELPGFFYHSNDGSNCTEPVLVYSNIGVCKSGSIGYVPSQYGQVKIAPTVTGNISIPTNFSMSIRTEYLQLYNTPVSVDCATYVCNGNSRCKQLLTQYTAACKTIESALQLSARLESVEVNSMLTISEEALQLATISSFNGDGYNFTNVLGASVYDPASGRVVQKRSVIEDLLFNKVVTNGLGTVDEDYKRCSNGRSVADLVCAQYYSGVMVLPGVVDAEKLHMYSASLIGGMALGGITAAAALPFSYAVQARLNYLALQTDVLQRNQQLLAESFNSAIGNITSAFESVKEAISQTSKGLNTVAHALTKVQEVVNSQGSALNQLTVQLQHNFQAISSSIDDIYSRLDILSADVQVDRLITGRLSALNAFVAQTLTKYTEVQASRKLAQQKVNECVKSQSQRYGFCGGDGEHIFSLVQAAPQGLLFLHTVLVPGDFVNVLAIAGLCVNGEIALTLREPGLVLFTHELQTYTATEYFVSSRRMFEPRKPTVSDFVQIESCVVTYVNLTSDQLPDVIPDYIDVNKTLDEILASLPNRTGPSLPLDVFNATYLNLTGEIADLEQRSESLRNTTEELRSLINNINNTLVDLEWLNRVETYIKWPWWVWLIIVIVLIFVVSLLVFCCISTGCCGCCGCCGACFSGCCRGPRLQPYEAFEKVHVQ.

An N-terminal signal peptide occupies residues 1-25 (MRSLIYFWLLLPVLPTLSLPQDVTR). The interval 26–734 (CQSTTNFRRF…TRELPGFFYH (709 aa)) is S1. Residues 26-1324 (CQSTTNFRRF…NRVETYIKWP (1299 aa)) lie on the Virion surface side of the membrane. Residues 617-745 (FQFTKGELIT…NDGSNCTEPV (129 aa)) form an interaction with host ANPEP region. Residues 735-1383 (SNDGSNCTEP…YEAFEKVHVQ (649 aa)) form an S2 region. The fusion peptide stretch occupies residues 955 to 975 (IGGMALGGITAAAALPFSYAV). The heptad repeat 1 (HR1) stretch occupies residues 969-1088 (LPFSYAVQAR…QVDRLITGRL (120 aa)). 2 coiled-coil regions span residues 1036–1080 (QEVV…DVQV) and 1272–1314 (TYLN…LEWL). The interval 1240 to 1336 (PDYIDVNKTL…VWLIIVIVLI (97 aa)) is heptad repeat 2 (HR2). A helical membrane pass occupies residues 1325-1344 (WWVWLIIVIVLIFVVSLLVF). The Intravirion portion of the chain corresponds to 1345 to 1383 (CCISTGCCGCCGCCGACFSGCCRGPRLQPYEAFEKVHVQ). The KxHxx motif lies at 1379–1383 (KVHVQ).

The protein belongs to the alphacoronaviruses spike protein family. As to quaternary structure, homotrimer. During virus morphogenesis, found in a complex with M and HE proteins. Interacts with host ANPEP.

The protein localises to the virion membrane. The protein resides in the host endoplasmic reticulum-Golgi intermediate compartment membrane. S1 region attaches the virion to the cell membrane by interacting with host ANPEP/aminopeptidase N, initiating the infection. Binding to the receptor probably induces conformational changes in the S glycoprotein unmasking the fusion peptide of S2 region and activating membranes fusion. S2 region belongs to the class I viral fusion protein. Under the current model, the protein has at least 3 conformational states: pre-fusion native state, pre-hairpin intermediate state, and post-fusion hairpin state. During viral and target cell membrane fusion, the coiled coil regions (heptad repeats) regions assume a trimer-of-hairpins structure, positioning the fusion peptide in close proximity to the C-terminal region of the ectodomain. The formation of this structure appears to drive apposition and subsequent fusion of viral and target cell membranes. This Porcine epidemic diarrhea virus (strain CV777) (PEDV) protein is Spike glycoprotein.